The primary structure comprises 328 residues: tRNA methyltransferase 10 homolog A (328 aa).

2 disordered regions span residues methionine 1–valine 91 and histidine 281–glutamine 328. Serine 22 is subject to Phosphoserine. The stretch at arginine 43 to serine 83 forms a coiled coil. Basic and acidic residues predominate over residues lysine 52–lysine 62. Residues glutamate 63 to glutamate 75 show a composition bias toward basic residues. The 191-residue stretch at arginine 88–valine 278 folds into the SAM-dependent MTase TRM10-type domain. Basic and acidic residues predominate over residues glutamate 305–glutamine 319.

The protein belongs to the class IV-like SAM-binding methyltransferase superfamily. TRM10 family. In terms of assembly, interacts with tRNA.

The protein localises to the nucleus. The protein resides in the nucleolus. It catalyses the reaction guanosine(9) in tRNA + S-adenosyl-L-methionine = N(1)-methylguanosine(9) in tRNA + S-adenosyl-L-homocysteine + H(+). Functionally, S-adenosyl-L-methionine-dependent guanine N(1)-methyltransferase that catalyzes the formation of N(1)-methylguanine at position 9 (m1G9) in tRNAs. Probably not able to catalyze formation of N(1)-methyladenine at position 9 (m1A9) in tRNAs. The sequence is that of tRNA methyltransferase 10 homolog A (Trmt10a) from Mus musculus (Mouse).